A 1260-amino-acid polypeptide reads, in one-letter code: MGKDQELLEAARTGNVALVEKLLSGRKGGILGGGSGPLPLSNLLSIWRGPNVNCTDSSGYTALHHAALNGHKDIVLKLLQFEASTNVADNKGYFPIHLAAWKGDVEIVKILIHHGPSHSRVNEQNNENETALHCAAQYGHSEVVAVLLEELTDPTIRNSKLETPLDLAALYGRLRVVKMIISAHPNLMSCNTRKHTPLHLAARNGHKAVVQVLLEAGMDVSCQTEKGSALHEAALFGKVDVVRVLLETGIDANIKDSLGRTVLDILKEHPSQKSLQIATLLQDYLEGVGRSVVLEEEHAQEDTAQETRLSSPAQSPSQKTKSETVTGELSKLLDEIKLCQEKDYSFEDLCHTISDHYLDNLSKISEEELGKNGSQSVRTSSTINLSPGEVEDEEEDPNSCGPTGLWEALTPCNGCRNLGFPMLAQESYPKKRNYPMEIVPSASLDTFPSENENFLCELVDTAVTKKPCSLEIARAPSPRTDNASEVAITAPGTGHHRNSSTGPTPDCSPPSPDTALKNIVKVIRPQPKQRTSIVSSLDFQRMNHNQEYFEISTSTGCTSFTSSPPVSPPTSSVETTEIKNEGAEHTDDLSQQEDDEPPKEYDAGQFAGLLHGSSPACEAPENPFHLYGKRNQGEDGQEEASLANSPLPFKQTPIENNPEPSVKKIKPKVVSRTIFHKRSHQLENHTIVGTRMSRGGSRNGDQWGVNPGGFVERACTLGRIRSLPKALIDMHLSKNVSKSDSDLIAYPSKDKARVNWSKSSTAERSSKDNSERTPSFTSEWEEIDKIMNSIDVGINSELEGMNGEATRPRCPVQTVGQWLESIGLPQYENHLTANGFDNVQFMGSNVMEDQDLLEIGILNSGHRQRILQAIQLLPKMRPIGHDGYHPTSVAEWLDSIELGDYTKAFLINGYTSMDLLKKIWELELINVLKISLIGHRKRILASLGDRLHEDPPQKPPRSITLREPSGNHTPPQLSPSLSQSTYTTGGSLDVPHIIMQGDARRRRNENYFDDIPRSKLERQMAQTGDWGEPSITLRPPNEATASTPVQYWQHHPEKLIFQSCDYKAFYLGSMLIKELRGTESTQDACAKMRANCQKSTEQMKKVPTIILSVSYKGVKFIDAANKNIIAEHEIRNISCAAQDPEDLSTFAYITKDLKSNHHYCHVFTAFDVNLAYEIILTLGQAFEVAYQLALQARKGGHSSTLPESFENKPSKPIPKPRVSIRKSVQIDPSEQKTLANLPWIVEPGQEAKRGINTKYETTIF.

ANK repeat units lie at residues 2–31 (GKDQ…GGIL), 58–87 (SGYT…STNV), 91–120 (KGYF…SHSR), 127–156 (ENET…DPTI), 160–189 (KLET…NLMS), 193–222 (RKHT…DVSC), and 225–254 (EKGS…DANI). The segment at 298-326 (HAQEDTAQETRLSSPAQSPSQKTKSETVT) is disordered. The span at 306-326 (ETRLSSPAQSPSQKTKSETVT) shows a compositional bias: polar residues. Phosphoserine is present on residues Ser310, Ser311, Ser315, Ser354, and Ser365. 3 disordered regions span residues 368–402 (ELGK…SCGP), 491–513 (PGTG…PSPD), and 556–642 (GCTS…EASL). Over residues 372-385 (NGSQSVRTSSTINL) the composition is skewed to polar residues. A Phosphothreonine modification is found at Thr504. 2 positions are modified to phosphoserine: Ser508 and Ser511. The segment covering 556-575 (GCTSFTSSPPVSPPTSSVET) has biased composition (low complexity). Over residues 576 to 588 (TEIKNEGAEHTDD) the composition is skewed to basic and acidic residues. At Ser739 the chain carries Phosphoserine. Residues 754 to 778 (VNWSKSSTAERSSKDNSERTPSFTS) are disordered. Thr773 carries the post-translational modification Phosphothreonine. A Phosphoserine modification is found at Ser775. SAM domains lie at 810–876 (CPVQ…LPKM) and 884–949 (YHPT…RLHE). Residue Tyr901 is modified to Phosphotyrosine. A Nuclear localization signal motif is present at residues 935–938 (HRKR). Positions 946-989 (RLHEDPPQKPPRSITLREPSGNHTPPQLSPSLSQSTYTTGGSLD) are disordered. Positions 969–984 (TPPQLSPSLSQSTYTT) are enriched in low complexity. Phosphoserine is present on Ser974. Tyr1007 is modified (phosphotyrosine). One can recognise a PID domain in the interval 1056–1213 (IFQSCDYKAF…SFENKPSKPI (158 aa)). Residues 1197-1217 (HSSTLPESFENKPSKPIPKPR) are disordered.

Interacts with EPHA8. Isoform 2 interacts with COIL. Isoform 3 interacts with DLG4. Nuclear translocation of isoform 3 requires an NMDAR-dependent proteolytic cleavage. A 35 kDa N-terminal form shuttles to the nucleus. In terms of tissue distribution, isoform 3 is brain specific and highly enriched in the postsynaptic densities (PSDs), especially in cortical, striatal and hippocampal PSDs.

Its subcellular location is the cytoplasm. It is found in the nucleus. The protein resides in the postsynaptic density. The protein localises to the cell projection. It localises to the dendritic spine. Its subcellular location is the cajal body. In terms of biological role, isoform 2 may participate in the regulation of nucleoplasmic coilin protein interactions in neuronal and transformed cells. Functionally, isoform 3 can regulate global protein synthesis by altering nucleolar numbers. This chain is Ankyrin repeat and sterile alpha motif domain-containing protein 1B (Anks1b), found in Rattus norvegicus (Rat).